The sequence spans 344 residues: Cyclin-G2 (344 aa).

The span at 301–313 (ESESEDSCEDMSC) shows a compositional bias: acidic residues. A disordered region spans residues 301–320 (ESESEDSCEDMSCGEESLSS).

This sequence belongs to the cyclin family. Cyclin G subfamily. In terms of tissue distribution, high levels in cerebellum, thymus, spleen and prostate. Low levels in skeletal muscle.

Its subcellular location is the cytoplasm. Functionally, may play a role in growth regulation and in negative regulation of cell cycle progression. This chain is Cyclin-G2 (CCNG2), found in Homo sapiens (Human).